The sequence spans 183 residues: Small ribosomal subunit protein uS4c (183 aa).

The S4 RNA-binding domain occupies 82–143; sequence MRLDNILFRL…KQRSKALIQN (62 aa).

This sequence belongs to the universal ribosomal protein uS4 family. As to quaternary structure, part of the 30S ribosomal subunit. Contacts protein S5. The interaction surface between S4 and S5 is involved in control of translational fidelity.

The protein resides in the plastid. The protein localises to the chloroplast. Functionally, one of the primary rRNA binding proteins, it binds directly to 16S rRNA where it nucleates assembly of the body of the 30S subunit. With S5 and S12 plays an important role in translational accuracy. The sequence is that of Small ribosomal subunit protein uS4c (rps4) from Crocosmia sp. (strain Porto Alegre 034).